We begin with the raw amino-acid sequence, 184 residues long: Flagellar transcriptional regulator FlhC (184 aa).

Zn(2+) contacts are provided by Cys-144, Cys-147, Cys-163, and Cys-166.

The protein belongs to the FlhC family. In terms of assembly, heterohexamer composed of two FlhC and four FlhD subunits. Each FlhC binds a FlhD dimer, forming a heterotrimer, and a hexamer assembles by dimerization of two heterotrimers. Requires Zn(2+) as cofactor.

It localises to the cytoplasm. Functionally, functions in complex with FlhD as a master transcriptional regulator that regulates transcription of several flagellar and non-flagellar operons by binding to their promoter region. Activates expression of class 2 flagellar genes, including fliA, which is a flagellum-specific sigma factor that turns on the class 3 genes. Also regulates genes whose products function in a variety of physiological pathways. In Verminephrobacter eiseniae (strain EF01-2), this protein is Flagellar transcriptional regulator FlhC.